A 627-amino-acid polypeptide reads, in one-letter code: DNA mismatch repair protein MutL (627 aa).

Positions 376-404 (APASTNEVREGSAARAGNYQPPEPPSREA) are disordered.

Belongs to the DNA mismatch repair MutL/HexB family.

Its function is as follows. This protein is involved in the repair of mismatches in DNA. It is required for dam-dependent methyl-directed DNA mismatch repair. May act as a 'molecular matchmaker', a protein that promotes the formation of a stable complex between two or more DNA-binding proteins in an ATP-dependent manner without itself being part of a final effector complex. The sequence is that of DNA mismatch repair protein MutL from Aeromonas salmonicida (strain A449).